Consider the following 416-residue polypeptide: Mitochondrial tRNA-specific 2-thiouridylase 1 (416 aa).

ATP-binding positions include 10-17 and Met36; that span reads AMSGGVDS. The interaction with target base in tRNA stretch occupies residues 96–98; the sequence is NPD. The active-site Nucleophile is the Cys101. Cys101 and Cys222 are oxidised to a cystine. Gly126 contacts ATP. Residues 171-173 are interaction with tRNA; it reads KDQ. The Cysteine persulfide intermediate role is filled by Cys222. The segment at 334 to 335 is interaction with tRNA; it reads NN. The tract at residues 397–416 is disordered; the sequence is QSNTNCLHKDTNQQHPEPHS. Basic and acidic residues predominate over residues 403-416; it reads LHKDTNQQHPEPHS.

The protein belongs to the MnmA/TRMU family.

The protein localises to the mitochondrion. It carries out the reaction 5-taurinomethyluridine(34) in tRNA + S-sulfanyl-L-cysteinyl-[protein] + AH2 + ATP = 5-taurinomethyl-2-thiouridine(34) in tRNA + L-cysteinyl-[protein] + A + AMP + diphosphate + H(+). In terms of biological role, catalyzes the 2-thiolation of uridine at the wobble position (U34) of mitochondrial tRNA(Lys), tRNA(Glu) and tRNA(Gln). Required for the formation of 5-taurinomethyl-2-thiouridine (tm5s2U) of mitochondrial tRNA(Lys), tRNA(Glu), and tRNA(Gln) at the wobble position. ATP is required to activate the C2 atom of the wobble base. The polypeptide is Mitochondrial tRNA-specific 2-thiouridylase 1 (trmu) (Danio rerio (Zebrafish)).